The chain runs to 279 residues: Putative pyruvate, phosphate dikinase regulatory protein (279 aa).

153–160 (GVSRTSKT) contributes to the ADP binding site.

It belongs to the pyruvate, phosphate/water dikinase regulatory protein family. PDRP subfamily.

The enzyme catalyses N(tele)-phospho-L-histidyl/L-threonyl-[pyruvate, phosphate dikinase] + ADP = N(tele)-phospho-L-histidyl/O-phospho-L-threonyl-[pyruvate, phosphate dikinase] + AMP + H(+). The catalysed reaction is N(tele)-phospho-L-histidyl/O-phospho-L-threonyl-[pyruvate, phosphate dikinase] + phosphate + H(+) = N(tele)-phospho-L-histidyl/L-threonyl-[pyruvate, phosphate dikinase] + diphosphate. In terms of biological role, bifunctional serine/threonine kinase and phosphorylase involved in the regulation of the pyruvate, phosphate dikinase (PPDK) by catalyzing its phosphorylation/dephosphorylation. The polypeptide is Putative pyruvate, phosphate dikinase regulatory protein (Rhodopseudomonas palustris (strain ATCC BAA-98 / CGA009)).